The primary structure comprises 710 residues: Integrator complex subunit 10 (710 aa).

Phosphoserine is present on residues Ser231, Ser381, and Ser382. Lys464 is covalently cross-linked (Glycyl lysine isopeptide (Lys-Gly) (interchain with G-Cter in SUMO2)).

This sequence belongs to the Integrator subunit 10 family. As to quaternary structure, component of the Integrator complex, composed of core subunits INTS1, INTS2, INTS3, INTS4, INTS5, INTS6, INTS7, INTS8, INTS9/RC74, INTS10, INTS11/CPSF3L, INTS12, INTS13, INTS14 and INTS15. The core complex associates with protein phosphatase 2A subunits PPP2CA and PPP2R1A, to form the Integrator-PP2A (INTAC) complex. INTS10 is part of the tail subcomplex, composed of INTS10, INTS13, INTS14 and INTS15.

It localises to the nucleus. In terms of biological role, component of the integrator complex, a multiprotein complex that terminates RNA polymerase II (Pol II) transcription in the promoter-proximal region of genes. The integrator complex provides a quality checkpoint during transcription elongation by driving premature transcription termination of transcripts that are unfavorably configured for transcriptional elongation: the complex terminates transcription by (1) catalyzing dephosphorylation of the C-terminal domain (CTD) of Pol II subunit POLR2A/RPB1 and SUPT5H/SPT5, (2) degrading the exiting nascent RNA transcript via endonuclease activity and (3) promoting the release of Pol II from bound DNA. The integrator complex is also involved in terminating the synthesis of non-coding Pol II transcripts, such as enhancer RNAs (eRNAs), small nuclear RNAs (snRNAs), telomerase RNAs and long non-coding RNAs (lncRNAs). Within the integrator complex, INTS10 is part of the integrator tail module that acts as a platform for the recruitment of transcription factors at promoters. May be not involved in the recruitment of cytoplasmic dynein to the nuclear envelope, probably as component of the integrator complex. This is Integrator complex subunit 10 (Ints10) from Mus musculus (Mouse).